The primary structure comprises 219 residues: Adenylate kinase (219 aa).

An ATP-binding site is contributed by G10 to T15. The segment at S30–V59 is NMP. Residues T31, R36, G57 to V59, G85 to R88, and Q92 contribute to the AMP site. The tract at residues G122 to D159 is LID. ATP-binding positions include R123 and T132–Y133. Positions 156 and 167 each coordinate AMP. ATP is bound at residue G202.

This sequence belongs to the adenylate kinase family. As to quaternary structure, monomer.

It localises to the cytoplasm. The enzyme catalyses AMP + ATP = 2 ADP. It participates in purine metabolism; AMP biosynthesis via salvage pathway; AMP from ADP: step 1/1. Functionally, catalyzes the reversible transfer of the terminal phosphate group between ATP and AMP. Plays an important role in cellular energy homeostasis and in adenine nucleotide metabolism. The chain is Adenylate kinase from Vesicomyosocius okutanii subsp. Calyptogena okutanii (strain HA).